Here is a 406-residue protein sequence, read N- to C-terminus: Pyruvate dehydrogenase E1 component subunit beta-3, chloroplastic (406 aa).

A chloroplast-targeting transit peptide spans 1–70 (MSAILQGAGA…PLIPNAVTTK (70 aa)). Glu-142 serves as a coordination point for thiamine diphosphate. K(+) is bound by residues Val-195, Ala-243, Ile-244, and Asn-248.

As to quaternary structure, tetramer of 2 alpha and 2 beta subunits. The cofactor is thiamine diphosphate.

The protein localises to the plastid. Its subcellular location is the chloroplast. It carries out the reaction N(6)-[(R)-lipoyl]-L-lysyl-[protein] + pyruvate + H(+) = N(6)-[(R)-S(8)-acetyldihydrolipoyl]-L-lysyl-[protein] + CO2. The pyruvate dehydrogenase complex catalyzes the overall conversion of pyruvate to acetyl-CoA and CO(2). It contains multiple copies of three enzymatic components: pyruvate dehydrogenase (E1), dihydrolipoamide acetyltransferase (E2) and lipoamide dehydrogenase (E3). The protein is Pyruvate dehydrogenase E1 component subunit beta-3, chloroplastic (E1-BETA-2) of Arabidopsis thaliana (Mouse-ear cress).